Here is a 96-residue protein sequence, read N- to C-terminus: Cytochrome c-553 (96 aa).

Residues methionine 1–alanine 19 form the signal peptide. Heme c contacts are provided by cysteine 29, cysteine 32, histidine 33, and methionine 73.

It belongs to the cytochrome c family. Binds 1 heme c group covalently per subunit.

It is found in the periplasm. Natural electron acceptor for a formate dehydrogenase. This Helicobacter pylori (strain J99 / ATCC 700824) (Campylobacter pylori J99) protein is Cytochrome c-553.